A 162-amino-acid polypeptide reads, in one-letter code: Photosystem II extrinsic protein V (162 aa).

A signal peptide spans 1–26 (MLKRYMLLAVATVFFAFQVLTSTATA). C62, C65, H66, and H117 together coordinate heme c.

It belongs to the cytochrome c family. PsbV subfamily. In terms of assembly, PSII is composed of 1 copy each of membrane proteins PsbA, PsbB, PsbC, PsbD, PsbE, PsbF, PsbH, PsbI, PsbJ, PsbK, PsbL, PsbM, PsbT, PsbX, PsbY, PsbZ, Psb30/Ycf12, peripheral proteins PsbO, CyanoQ (PsbQ), PsbU, PsbV and a large number of cofactors. It forms dimeric complexes. Heme c is required as a cofactor.

The protein localises to the cellular thylakoid membrane. Functionally, one of the extrinsic, lumenal subunits of photosystem II (PSII). PSII is a light-driven water plastoquinone oxidoreductase, using light energy to abstract electrons from H(2)O, generating a proton gradient subsequently used for ATP formation. The extrinsic proteins stabilize the structure of photosystem II oxygen-evolving complex (OEC), the ion environment of oxygen evolution and protect the OEC against heat-induced inactivation. Low-potential cytochrome c that plays a role in the OEC of PSII. The protein is Photosystem II extrinsic protein V of Acaryochloris marina (strain MBIC 11017).